The following is a 345-amino-acid chain: Protein RecA (345 aa).

68 to 75 (GVESSGKT) contributes to the ATP binding site.

It belongs to the RecA family.

It is found in the cytoplasm. Can catalyze the hydrolysis of ATP in the presence of single-stranded DNA, the ATP-dependent uptake of single-stranded DNA by duplex DNA, and the ATP-dependent hybridization of homologous single-stranded DNAs. It interacts with LexA causing its activation and leading to its autocatalytic cleavage. This Aquifex aeolicus (strain VF5) protein is Protein RecA.